A 362-amino-acid polypeptide reads, in one-letter code: Tyrosine recombinase XerH (362 aa).

Residues 43-140 (ECLNELNQAC…ALLGLFSYID (98 aa)) enclose the Core-binding (CB) domain. A Tyr recombinase domain is found at 170 to 357 (KLPTHLNNEE…DKQRLEEAAS (188 aa)). Active-site residues include Arg-213, Lys-239, His-309, Arg-312, and His-335. The active-site O-(3'-phospho-DNA)-tyrosine intermediate is the Tyr-344.

This sequence belongs to the 'phage' integrase family. XerH subfamily.

Its subcellular location is the cytoplasm. FtsK is required for recombination. Its function is as follows. Site-specific tyrosine recombinase, which acts by catalyzing the cutting and rejoining of the recombining DNA molecules. Involved in chromosome segregation. May contribute to chromosome decatenation. This Helicobacter pylori (strain ATCC 700392 / 26695) (Campylobacter pylori) protein is Tyrosine recombinase XerH.